Consider the following 480-residue polypeptide: Protein nucleotidyltransferase YdiU (480 aa).

Residues glycine 86, glycine 88, arginine 89, lysine 109, aspartate 121, glycine 122, arginine 172, and arginine 179 each contribute to the ATP site. Aspartate 248 (proton acceptor) is an active-site residue. Positions 249 and 258 each coordinate Mg(2+). Aspartate 258 contributes to the ATP binding site.

The protein belongs to the SELO family. Mg(2+) is required as a cofactor. It depends on Mn(2+) as a cofactor.

The catalysed reaction is L-seryl-[protein] + ATP = 3-O-(5'-adenylyl)-L-seryl-[protein] + diphosphate. The enzyme catalyses L-threonyl-[protein] + ATP = 3-O-(5'-adenylyl)-L-threonyl-[protein] + diphosphate. It catalyses the reaction L-tyrosyl-[protein] + ATP = O-(5'-adenylyl)-L-tyrosyl-[protein] + diphosphate. It carries out the reaction L-histidyl-[protein] + UTP = N(tele)-(5'-uridylyl)-L-histidyl-[protein] + diphosphate. The catalysed reaction is L-seryl-[protein] + UTP = O-(5'-uridylyl)-L-seryl-[protein] + diphosphate. The enzyme catalyses L-tyrosyl-[protein] + UTP = O-(5'-uridylyl)-L-tyrosyl-[protein] + diphosphate. Functionally, nucleotidyltransferase involved in the post-translational modification of proteins. It can catalyze the addition of adenosine monophosphate (AMP) or uridine monophosphate (UMP) to a protein, resulting in modifications known as AMPylation and UMPylation. The chain is Protein nucleotidyltransferase YdiU from Klebsiella pneumoniae (strain 342).